The sequence spans 129 residues: Iron-sulfur cluster assembly 1 homolog, mitochondrial (129 aa).

The N-terminal 12 residues, 1-12 (MSASLVRATVRA), are a transit peptide targeting the mitochondrion. 3 residues coordinate Fe cation: Cys57, Cys121, and Cys123.

It belongs to the HesB/IscA family. Interacts with CRY2, but not with CRY1 (in vitro).

Its subcellular location is the mitochondrion. Involved in the maturation of mitochondrial 4Fe-4S proteins functioning late in the iron-sulfur cluster assembly pathway. Probably involved in the binding of an intermediate of Fe/S cluster assembly. The polypeptide is Iron-sulfur cluster assembly 1 homolog, mitochondrial (Isca1) (Rattus norvegicus (Rat)).